A 106-amino-acid polypeptide reads, in one-letter code: UPF0145 protein Cthe_0398 (106 aa).

This sequence belongs to the UPF0145 family.

The chain is UPF0145 protein Cthe_0398 from Acetivibrio thermocellus (strain ATCC 27405 / DSM 1237 / JCM 9322 / NBRC 103400 / NCIMB 10682 / NRRL B-4536 / VPI 7372) (Clostridium thermocellum).